We begin with the raw amino-acid sequence, 286 residues long: CCR4-NOT transcription complex subunit 7 (286 aa).

A divalent metal cation-binding residues include D40, E42, D161, D230, and E278.

Belongs to the CAF1 family. In terms of assembly, component of the CCR4-NOT complex. Mn(2+) serves as cofactor. Requires Mg(2+) as cofactor. The cofactor is Co(2+).

Its subcellular location is the nucleus. It is found in the cytoplasm. It carries out the reaction Exonucleolytic cleavage of poly(A) to 5'-AMP.. In terms of biological role, has 3'-5' poly(A) exoribonuclease activity for synthetic poly(A) RNA substrate. Catalytic component of the CCR4-NOT complex which is one of the major cellular mRNA deadenylases and is linked to various cellular processes including bulk mRNA degradation, miRNA-mediated repression, translational repression during translational initiation and general transcription regulation. During miRNA-mediated repression the complex also seems to act as translational repressor during translational initiation. Additional complex functions may be a consequence of its influence on mRNA expression. This Danio rerio (Zebrafish) protein is CCR4-NOT transcription complex subunit 7 (cnot7).